A 252-amino-acid polypeptide reads, in one-letter code: Imidazole glycerol phosphate synthase subunit HisF (252 aa).

Catalysis depends on residues D11 and D130.

The protein belongs to the HisA/HisF family. In terms of assembly, heterodimer of HisH and HisF.

Its subcellular location is the cytoplasm. The enzyme catalyses 5-[(5-phospho-1-deoxy-D-ribulos-1-ylimino)methylamino]-1-(5-phospho-beta-D-ribosyl)imidazole-4-carboxamide + L-glutamine = D-erythro-1-(imidazol-4-yl)glycerol 3-phosphate + 5-amino-1-(5-phospho-beta-D-ribosyl)imidazole-4-carboxamide + L-glutamate + H(+). It functions in the pathway amino-acid biosynthesis; L-histidine biosynthesis; L-histidine from 5-phospho-alpha-D-ribose 1-diphosphate: step 5/9. Its function is as follows. IGPS catalyzes the conversion of PRFAR and glutamine to IGP, AICAR and glutamate. The HisF subunit catalyzes the cyclization activity that produces IGP and AICAR from PRFAR using the ammonia provided by the HisH subunit. The protein is Imidazole glycerol phosphate synthase subunit HisF of Anoxybacillus flavithermus (strain DSM 21510 / WK1).